Here is a 251-residue protein sequence, read N- to C-terminus: Aspartate/glutamate leucyltransferase (251 aa).

Belongs to the R-transferase family. Bpt subfamily.

It is found in the cytoplasm. It catalyses the reaction N-terminal L-glutamyl-[protein] + L-leucyl-tRNA(Leu) = N-terminal L-leucyl-L-glutamyl-[protein] + tRNA(Leu) + H(+). The catalysed reaction is N-terminal L-aspartyl-[protein] + L-leucyl-tRNA(Leu) = N-terminal L-leucyl-L-aspartyl-[protein] + tRNA(Leu) + H(+). Functionally, functions in the N-end rule pathway of protein degradation where it conjugates Leu from its aminoacyl-tRNA to the N-termini of proteins containing an N-terminal aspartate or glutamate. This chain is Aspartate/glutamate leucyltransferase, found in Stenotrophomonas maltophilia (strain K279a).